Reading from the N-terminus, the 89-residue chain is MMNDNNERKPLRTIKGRVISNKMQKTVTVLVERQIKHALYGKYIKRSTKIHAHDADDLCNEGDVVLMTEVAPISKTKNWRVVEIVARSD.

This sequence belongs to the universal ribosomal protein uS17 family. As to quaternary structure, part of the 30S ribosomal subunit.

One of the primary rRNA binding proteins, it binds specifically to the 5'-end of 16S ribosomal RNA. The protein is Small ribosomal subunit protein uS17 of Xylella fastidiosa (strain M12).